A 171-amino-acid polypeptide reads, in one-letter code: Co-chaperone protein HscB (171 aa).

The J domain occupies 2–74; it reads DYFTLFGLPA…LTRAEYLLSL (73 aa).

It belongs to the HscB family. As to quaternary structure, interacts with HscA and stimulates its ATPase activity. Interacts with IscU.

Co-chaperone involved in the maturation of iron-sulfur cluster-containing proteins. Seems to help targeting proteins to be folded toward HscA. The protein is Co-chaperone protein HscB of Salmonella schwarzengrund (strain CVM19633).